Consider the following 444-residue polypeptide: Glutamyl-tRNA reductase (444 aa).

Residues 49 to 52 (TCNR), Ser-109, 114 to 116 (ETQ), and Gln-120 each bind substrate. The Nucleophile role is filled by Cys-50. 189–194 (GAGKMG) lines the NADP(+) pocket.

The protein belongs to the glutamyl-tRNA reductase family. In terms of assembly, homodimer.

The enzyme catalyses (S)-4-amino-5-oxopentanoate + tRNA(Glu) + NADP(+) = L-glutamyl-tRNA(Glu) + NADPH + H(+). The protein operates within porphyrin-containing compound metabolism; protoporphyrin-IX biosynthesis; 5-aminolevulinate from L-glutamyl-tRNA(Glu): step 1/2. Catalyzes the NADPH-dependent reduction of glutamyl-tRNA(Glu) to glutamate 1-semialdehyde (GSA). This chain is Glutamyl-tRNA reductase, found in Bacillus cereus (strain AH187).